We begin with the raw amino-acid sequence, 373 residues long: Dual-specificity RNA methyltransferase RlmN (373 aa).

Catalysis depends on Glu-94, which acts as the Proton acceptor. The Radical SAM core domain occupies 100 to 339 (EDDRATLCVS…VIVRKTRGDD (240 aa)). Cys-107 and Cys-344 are oxidised to a cystine. [4Fe-4S] cluster-binding residues include Cys-114, Cys-118, and Cys-121. Residues 168-169 (GE), Ser-200, 222-224 (SIH), and Asn-301 contribute to the S-adenosyl-L-methionine site. Cys-344 acts as the S-methylcysteine intermediate in catalysis.

The protein belongs to the radical SAM superfamily. RlmN family. The cofactor is [4Fe-4S] cluster.

The protein resides in the cytoplasm. It catalyses the reaction adenosine(2503) in 23S rRNA + 2 reduced [2Fe-2S]-[ferredoxin] + 2 S-adenosyl-L-methionine = 2-methyladenosine(2503) in 23S rRNA + 5'-deoxyadenosine + L-methionine + 2 oxidized [2Fe-2S]-[ferredoxin] + S-adenosyl-L-homocysteine. It carries out the reaction adenosine(37) in tRNA + 2 reduced [2Fe-2S]-[ferredoxin] + 2 S-adenosyl-L-methionine = 2-methyladenosine(37) in tRNA + 5'-deoxyadenosine + L-methionine + 2 oxidized [2Fe-2S]-[ferredoxin] + S-adenosyl-L-homocysteine. Its function is as follows. Specifically methylates position 2 of adenine 2503 in 23S rRNA and position 2 of adenine 37 in tRNAs. m2A2503 modification seems to play a crucial role in the proofreading step occurring at the peptidyl transferase center and thus would serve to optimize ribosomal fidelity. This is Dual-specificity RNA methyltransferase RlmN from Shewanella pealeana (strain ATCC 700345 / ANG-SQ1).